Consider the following 445-residue polypeptide: T-box transcription factor TBX19 (445 aa).

Residues 45–218 (LEDAPLWQRF…YNPFAKAFLD (174 aa)) constitute a DNA-binding region (T-box).

It is found in the nucleus. Transcriptional regulator involved in developmental processes. Can activate POMC gene expression and repress the alpha glycoprotein subunit and thyroid-stimulating hormone beta promoters. This Canis lupus familiaris (Dog) protein is T-box transcription factor TBX19.